A 274-amino-acid chain; its full sequence is NH(3)-dependent NAD(+) synthetase (274 aa).

G46–S53 contacts ATP. D52 is a binding site for Mg(2+). R140 provides a ligand contact to deamido-NAD(+). T160 contributes to the ATP binding site. Residue E165 coordinates Mg(2+). 2 residues coordinate deamido-NAD(+): K173 and D180. Positions 189 and 211 each coordinate ATP. H260–K261 provides a ligand contact to deamido-NAD(+).

Belongs to the NAD synthetase family. In terms of assembly, homodimer.

It carries out the reaction deamido-NAD(+) + NH4(+) + ATP = AMP + diphosphate + NAD(+) + H(+). Its pathway is cofactor biosynthesis; NAD(+) biosynthesis; NAD(+) from deamido-NAD(+) (ammonia route): step 1/1. Catalyzes the ATP-dependent amidation of deamido-NAD to form NAD. Uses ammonia as a nitrogen source. The protein is NH(3)-dependent NAD(+) synthetase of Lactococcus lactis subsp. cremoris (strain SK11).